The primary structure comprises 303 residues: UDP-3-O-acyl-N-acetylglucosamine deacetylase (303 aa).

The Zn(2+) site is built by His78, His237, and Asp241. Residue His264 is the Proton donor of the active site.

The protein belongs to the LpxC family. Zn(2+) serves as cofactor.

The catalysed reaction is a UDP-3-O-[(3R)-3-hydroxyacyl]-N-acetyl-alpha-D-glucosamine + H2O = a UDP-3-O-[(3R)-3-hydroxyacyl]-alpha-D-glucosamine + acetate. Its pathway is glycolipid biosynthesis; lipid IV(A) biosynthesis; lipid IV(A) from (3R)-3-hydroxytetradecanoyl-[acyl-carrier-protein] and UDP-N-acetyl-alpha-D-glucosamine: step 2/6. Its function is as follows. Catalyzes the hydrolysis of UDP-3-O-myristoyl-N-acetylglucosamine to form UDP-3-O-myristoylglucosamine and acetate, the committed step in lipid A biosynthesis. The sequence is that of UDP-3-O-acyl-N-acetylglucosamine deacetylase from Pseudomonas savastanoi pv. phaseolicola (strain 1448A / Race 6) (Pseudomonas syringae pv. phaseolicola (strain 1448A / Race 6)).